A 365-amino-acid polypeptide reads, in one-letter code: Pre-small/secreted glycoprotein (365 aa).

An N-terminal signal peptide occupies residues 1–32 (MGASGILQLPRERFRKTSFFVWVIILFHKVFS). N-linked (GlcNAc...) asparagine; by host glycosylation occurs at Asn-40. Cystine bridges form between Cys-108–Cys-135 and Cys-121–Cys-147. N-linked (GlcNAc...) asparagine; by host glycans are attached at residues Asn-204, Asn-228, Asn-257, and Asn-268.

The protein belongs to the filoviruses glycoprotein family. In terms of assembly, homodimer; disulfide-linked. The homodimers are linked by two disulfide bonds in a parallel orientation. Monomer. This precursor is processed into mature sGP and delta-peptide by host furin or furin-like proteases. The cleavage site corresponds to the furin optimal cleavage sequence [KR]-X-[KR]-R. Post-translationally, N-glycosylated. In terms of processing, O-glycosylated.

Its subcellular location is the secreted. Its function is as follows. Seems to possess an anti-inflammatory activity as it can reverse the barrier-decreasing effects of TNF alpha. Might therefore contribute to the lack of inflammatory reaction seen during infection in spite the of extensive necrosis and massive virus production. Does not seem to be involved in activation of primary macrophages. Does not seem to interact specifically with neutrophils. Functionally, viroporin that permeabilizes mammalian cell plasma membranes. It acts by altering permeation of ionic compounds and small molecules. This activity may lead to viral enterotoxic activity. The sequence is that of Pre-small/secreted glycoprotein (GP) from Epomops franqueti (Franquet's epauletted fruit bat).